A 512-amino-acid chain; its full sequence is Lysine--tRNA ligase (512 aa).

2 residues coordinate Mg(2+): Glu408 and Glu415.

It belongs to the class-II aminoacyl-tRNA synthetase family. In terms of assembly, homodimer. Mg(2+) serves as cofactor.

The protein localises to the cytoplasm. The enzyme catalyses tRNA(Lys) + L-lysine + ATP = L-lysyl-tRNA(Lys) + AMP + diphosphate. This is Lysine--tRNA ligase from Prochlorococcus marinus subsp. pastoris (strain CCMP1986 / NIES-2087 / MED4).